Here is a 399-residue protein sequence, read N- to C-terminus: Chorismate synthase (399 aa).

Residues Arg40 and Arg46 each contribute to the NADP(+) site. FMN contacts are provided by residues 135 to 137 (RAS), 256 to 257 (QA), Gly301, 316 to 320 (KPIAT), and Arg342.

Belongs to the chorismate synthase family. As to quaternary structure, homotetramer. FMNH2 is required as a cofactor.

The catalysed reaction is 5-O-(1-carboxyvinyl)-3-phosphoshikimate = chorismate + phosphate. It functions in the pathway metabolic intermediate biosynthesis; chorismate biosynthesis; chorismate from D-erythrose 4-phosphate and phosphoenolpyruvate: step 7/7. Functionally, catalyzes the anti-1,4-elimination of the C-3 phosphate and the C-6 proR hydrogen from 5-enolpyruvylshikimate-3-phosphate (EPSP) to yield chorismate, which is the branch point compound that serves as the starting substrate for the three terminal pathways of aromatic amino acid biosynthesis. This reaction introduces a second double bond into the aromatic ring system. The protein is Chorismate synthase of Paenarthrobacter aurescens (strain TC1).